Here is a 492-residue protein sequence, read N- to C-terminus: Stage IV sporulation protein A (492 aa).

The Walker A motif; involved in ATP-binding signature appears at 24-31; that stretch reads GAVRTGKS. Residue 24–31 coordinates ATP; it reads GAVRTGKS.

It is found in the cytoplasm. The catalysed reaction is ATP + H2O = ADP + phosphate + H(+). Functionally, ATPase. Has a role at an early stage in the morphogenesis of the spore coat outer layers. Directs the assembly of the coat and exosporium to an area around the forespore. The polypeptide is Stage IV sporulation protein A (Bacillus anthracis).